The following is a 116-amino-acid chain: Somatostatin (116 aa).

A signal peptide spans Met1–Cys24. Residues Ala25–Arg88 constitute a propeptide that is removed on maturation. Ala43 is subject to Alanine amide. A disordered region spans residues Gln62 to Arg99. A disulfide bridge links Cys105 with Cys116.

Belongs to the somatostatin family. In terms of processing, C-terminal amidation of the neuronostatin peptide is required for its biological activity, including for the regulation of mean arterial pressure.

The protein resides in the secreted. Functionally, inhibits the secretion of pituitary hormones, including that of growth hormone/somatotropin (GH1), PRL, ACTH, luteinizing hormone (LH) and TSH. Also impairs ghrelin- and GnRH-stimulated secretion of GH1 and LH; the inhibition of ghrelin-stimulated secretion of GH1 can be further increased by neuronostatin. May enhance low-glucose-induced glucagon release by pancreatic alpha cells. This effect may be mediated by binding to GPR107 and PKA activation. May regulate cardiac contractile function. May compromise cardiomyocyte viability. In the central nervous system, may impair memory retention and may affect hippocampal excitability. May also have anxiolytic and anorexigenic effects. May play a role in arterial pressure regulation. May inhibit basal, but not ghrelin- or GnRH-stimulated secretion of GH1 or LH, but does not affect the release of other pituitary hormones, including PRL, ACTH, FSH or TSH. Potentiates inhibitory action of somatostatin on ghrelin-stimulated secretion of GH1, but not that on GnRH-stimulated secretion of LH. The chain is Somatostatin (SST) from Canis lupus familiaris (Dog).